A 269-amino-acid chain; its full sequence is Proenkephalin-A (269 aa).

The N-terminal stretch at 1 to 24 (MAQFLRLCIWLLALGSCLLATVQA) is a signal peptide. 3 disulfides stabilise this stretch: Cys-26/Cys-48, Cys-30/Cys-52, and Cys-33/Cys-65. Residues 165-191 (DNRAKDSHQQESTNNDEDSTSKRYGGF) form a disordered region. 2 consecutive propeptides follow at residues 198-209 (SPQLEDEAKELQ) and 219-229 (VGRPEWWMDYQ). Ser-253 carries the post-translational modification Phosphoserine.

Belongs to the opioid neuropeptide precursor family. Proenkephalin-A is cleaved by CTSL to generate Met-enkephalin. In terms of processing, processed and degraded by ACE. Post-translationally, probably cleaved by ACE. Processed by ACE to generate Met-enkephalin in the nucleus accumbens of the brain. In terms of processing, the N-terminal domain contains 6 conserved cysteines thought to be involved in disulfide bonding and/or processing. Expressed in brain, heart and testis.

The protein localises to the secreted. It is found in the cytoplasmic vesicle. The protein resides in the secretory vesicle. Its subcellular location is the chromaffin granule lumen. Its function is as follows. Neuropeptide that competes with and mimic the effects of opiate drugs. They play a role in a number of physiologic functions, including pain perception and responses to stress. Functionally, met-enkephalin-Arg-Phe neuropeptide acts as a strong ligand of Mu-type opioid receptor OPRM1. Met-enkephalin-Arg-Phe-binding to OPRM1 in the nucleus accumbens of the brain increases activation of OPRM1, leading to long-term synaptic depression of glutamate release. In terms of biological role, increases glutamate release in the striatum and decreases GABA concentration in the striatum. Increases glutamate release in the striatum. The polypeptide is Proenkephalin-A (Penk) (Rattus norvegicus (Rat)).